The chain runs to 83 residues: Mu-theraphotoxin-Hhn2i (83 aa).

A signal peptide spans Met-1–Ala-21. Positions Ser-22–Arg-48 are excised as a propeptide. 3 disulfide bridges follow: Cys-50–Cys-65, Cys-57–Cys-70, and Cys-64–Cys-77. Leu-81 bears the Leucine amide mark.

It belongs to the neurotoxin 10 (Hwtx-1) family. 15 (Hntx-3) subfamily. In terms of assembly, monomer. As to expression, expressed by the venom gland.

It is found in the secreted. Functionally, lethal neurotoxin. Selectively blocks tetrodotoxin-sensitive voltage-gated sodium channels (Nav). Does not affect tetrodotoxin-resistant voltage-gated sodium channels or calcium channels. This is Mu-theraphotoxin-Hhn2i from Cyriopagopus hainanus (Chinese bird spider).